The chain runs to 234 residues: Large ribosomal subunit protein uL1 (234 aa).

It belongs to the universal ribosomal protein uL1 family. In terms of assembly, part of the 50S ribosomal subunit.

Functionally, binds directly to 23S rRNA. The L1 stalk is quite mobile in the ribosome, and is involved in E site tRNA release. In terms of biological role, protein L1 is also a translational repressor protein, it controls the translation of the L11 operon by binding to its mRNA. The protein is Large ribosomal subunit protein uL1 of Klebsiella pneumoniae subsp. pneumoniae (strain ATCC 700721 / MGH 78578).